A 182-amino-acid polypeptide reads, in one-letter code: Transcription termination/antitermination protein NusG (182 aa).

The protein belongs to the NusG family.

Functionally, participates in transcription elongation, termination and antitermination. This Chlamydia muridarum (strain MoPn / Nigg) protein is Transcription termination/antitermination protein NusG.